Consider the following 614-residue polypeptide: Sodium- and chloride-dependent betaine transporter (614 aa).

A disordered region spans residues 1 to 33 (MDRKVAVPEDGPPVVSWLPEEGEKLDQEGEDQV). The Cytoplasmic segment spans residues 1–44 (MDRKVAVPEDGPPVVSWLPEEGEKLDQEGEDQVKDRGQWTNKME). Over residues 21–33 (EGEKLDQEGEDQV) the composition is skewed to basic and acidic residues. A run of 3 helical transmembrane segments spans residues 45–65 (FVLS…FPYL), 73–92 (AFFI…VFFL), and 117–137 (GIGL…IIIL). The Extracellular portion of the chain corresponds to 138 to 210 (AWALFYLFSS…SGIHDLGALR (73 aa)). The cysteines at positions 157 and 166 are disulfide-linked. Asn-171 and Asn-183 each carry an N-linked (GlcNAc...) asparagine glycan. Helical transmembrane passes span 211 to 229 (WELA…FCIW), 238 to 255 (VVYF…ILLI), 291 to 308 (IFFS…LGSY), 320 to 341 (IALC…FSIL), 374 to 393 (MPLS…FLGL), 423 to 441 (LLIL…FLVT), 458 to 478 (GICL…VYGA), 499 to 518 (ISWL…FSLS), and 538 to 556 (IGWF…FVII). The Cytoplasmic portion of the chain corresponds to 557 to 614 (TLLKTRGSFKKRLRQLTTPDPSLPQPKQHLYLDGGTSQDCGPSPTKEGLIVGEKETHL). The tract at residues 591 to 614 (GTSQDCGPSPTKEGLIVGEKETHL) is disordered.

It belongs to the sodium:neurotransmitter symporter (SNF) (TC 2.A.22) family. SLC6A12 subfamily. Interacts with LIN7C. In terms of tissue distribution, kidney.

Its subcellular location is the basolateral cell membrane. The protein resides in the cell membrane. The catalysed reaction is 4-aminobutanoate(out) + chloride(out) + 3 Na(+)(out) = 4-aminobutanoate(in) + chloride(in) + 3 Na(+)(in). It catalyses the reaction glycine betaine(out) + 2 chloride(out) + 3 Na(+)(out) = glycine betaine(in) + 2 chloride(in) + 3 Na(+)(in). In terms of biological role, transporter that mediates cellular uptake of betaine and GABA in a sodium- and chloride-dependent process. May have a role in regulation of GABAergic transmission in the brain through the reuptake of GABA into presynaptic terminals, as well as in osmotic regulation. Probably also involved in renal and hepatic osmotic regulation. This is Sodium- and chloride-dependent betaine transporter (SLC6A12) from Canis lupus familiaris (Dog).